The primary structure comprises 178 residues: Gamma-crystallin S (178 aa).

Serine 2 carries the N-acetylserine modification. The segment at 2 to 5 is N-terminal arm; sequence SKSV. 2 consecutive Beta/gamma crystallin 'Greek key' domains span residues 6–44 and 45–87; these read AKIT…RVTG and GAWV…KVIH. The connecting peptide stretch occupies residues 88–93; sequence LSSGGQ. 2 consecutive Beta/gamma crystallin 'Greek key' domains span residues 94–134 and 135–177; these read YKLQ…KVLD and GVWV…RRIM.

It belongs to the beta/gamma-crystallin family. Monomer.

Functionally, crystallins are the dominant structural components of the vertebrate eye lens. The polypeptide is Gamma-crystallin S (CRYGS) (Macropus fuliginosus (Western gray kangaroo)).